The following is a 207-amino-acid chain: Ribosomal RNA small subunit methyltransferase G (207 aa).

Residues Gly-73, Leu-78, 124–125, and Arg-139 each bind S-adenosyl-L-methionine; that span reads VE.

This sequence belongs to the methyltransferase superfamily. RNA methyltransferase RsmG family.

It localises to the cytoplasm. The catalysed reaction is guanosine(527) in 16S rRNA + S-adenosyl-L-methionine = N(7)-methylguanosine(527) in 16S rRNA + S-adenosyl-L-homocysteine. Specifically methylates the N7 position of guanine in position 527 of 16S rRNA. The sequence is that of Ribosomal RNA small subunit methyltransferase G from Enterobacter sp. (strain 638).